We begin with the raw amino-acid sequence, 350 residues long: Protein Wnt-2 (350 aa).

Residues 1-25 form the signal peptide; that stretch reads MNFLPNGICFYLSVAICWFSSRVDA. Cystine bridges form between Cys-74/Cys-85, Cys-125/Cys-133, Cys-135/Cys-155, Cys-204/Cys-218, Cys-206/Cys-213, Cys-276/Cys-307, Cys-292/Cys-302, Cys-306/Cys-346, Cys-322/Cys-337, Cys-324/Cys-334, and Cys-329/Cys-330. A glycan (N-linked (GlcNAc...) asparagine) is linked at Asn-132. Ser-210 carries O-palmitoleoyl serine; by PORCN lipidation. Asn-293 is a glycosylation site (N-linked (GlcNAc...) asparagine).

Belongs to the Wnt family. Palmitoleoylation is required for efficient binding to frizzled receptors. Depalmitoleoylation leads to Wnt signaling pathway inhibition.

It is found in the secreted. It localises to the extracellular space. The protein localises to the extracellular matrix. Its function is as follows. Ligand for members of the frizzled family of seven transmembrane receptors. Functions in the canonical Wnt signaling pathway that results in activation of transcription factors of the TCF/LEF family. This Danio rerio (Zebrafish) protein is Protein Wnt-2 (wnt2).